The following is a 625-amino-acid chain: Probable potassium transport system protein Kup 2 (625 aa).

12 consecutive transmembrane segments (helical) span residues 15-35, 52-72, 98-118, 134-154, 164-184, 203-223, 246-266, 284-304, 336-356, 365-385, 394-414, and 417-437; these read LSFAALGVVFGDIGTSPLYAF, ILSLIFWSLIIIVSIKYLVIV, GGWLLFITLVGIGLIIGDGIL, LSPNLAKYVLPVTLIILFFLF, IGIYFAPVMLIWFITIGVLGF, IYFFMIHKYFALFILGGVFLV, WFAVALPALLLCYFGQGAFVL, FLPVMIILATIATIIASQAII, VYLPLINFILALGTCSLVVIF, AYGIAVNLDMLITTVLVGIIA, FKVMIFPLILVIELAFFAGNI, and LLTGGWIPILIAFLGFVVMYT.

Belongs to the HAK/KUP transporter (TC 2.A.72) family.

The protein localises to the cell inner membrane. The catalysed reaction is K(+)(in) + H(+)(in) = K(+)(out) + H(+)(out). Transport of potassium into the cell. Likely operates as a K(+):H(+) symporter. The sequence is that of Probable potassium transport system protein Kup 2 from Legionella pneumophila subsp. pneumophila (strain Philadelphia 1 / ATCC 33152 / DSM 7513).